A 588-amino-acid polypeptide reads, in one-letter code: Proline--tRNA ligase (588 aa).

Belongs to the class-II aminoacyl-tRNA synthetase family. ProS type 1 subfamily. In terms of assembly, homodimer.

The protein localises to the cytoplasm. The enzyme catalyses tRNA(Pro) + L-proline + ATP = L-prolyl-tRNA(Pro) + AMP + diphosphate. Functionally, catalyzes the attachment of proline to tRNA(Pro) in a two-step reaction: proline is first activated by ATP to form Pro-AMP and then transferred to the acceptor end of tRNA(Pro). As ProRS can inadvertently accommodate and process non-cognate amino acids such as alanine and cysteine, to avoid such errors it has two additional distinct editing activities against alanine. One activity is designated as 'pretransfer' editing and involves the tRNA(Pro)-independent hydrolysis of activated Ala-AMP. The other activity is designated 'posttransfer' editing and involves deacylation of mischarged Ala-tRNA(Pro). The misacylated Cys-tRNA(Pro) is not edited by ProRS. The chain is Proline--tRNA ligase from Helicobacter hepaticus (strain ATCC 51449 / 3B1).